A 385-amino-acid chain; its full sequence is tRNA pseudouridine synthase D (385 aa).

The active-site Nucleophile is the aspartate 86. Residues 165–305 (GFPNYFGNQR…TRFLQKDIAP (141 aa)) form the TRUD domain.

This sequence belongs to the pseudouridine synthase TruD family.

It catalyses the reaction uridine(13) in tRNA = pseudouridine(13) in tRNA. In terms of biological role, responsible for synthesis of pseudouridine from uracil-13 in transfer RNAs. The protein is tRNA pseudouridine synthase D of Helicobacter hepaticus (strain ATCC 51449 / 3B1).